Here is a 621-residue protein sequence, read N- to C-terminus: Glutamyl-tRNA(Gln) amidotransferase subunit E (621 aa).

The protein belongs to the GatB/GatE family. GatE subfamily. In terms of assembly, heterodimer of GatD and GatE.

The catalysed reaction is L-glutamyl-tRNA(Gln) + L-glutamine + ATP + H2O = L-glutaminyl-tRNA(Gln) + L-glutamate + ADP + phosphate + H(+). Its function is as follows. Allows the formation of correctly charged Gln-tRNA(Gln) through the transamidation of misacylated Glu-tRNA(Gln) in organisms which lack glutaminyl-tRNA synthetase. The reaction takes place in the presence of glutamine and ATP through an activated gamma-phospho-Glu-tRNA(Gln). The GatDE system is specific for glutamate and does not act on aspartate. The polypeptide is Glutamyl-tRNA(Gln) amidotransferase subunit E (Methanobrevibacter smithii (strain ATCC 35061 / DSM 861 / OCM 144 / PS)).